The chain runs to 767 residues: 5-methyltetrahydropteroyltriglutamate--homocysteine methyltransferase (767 aa).

K19 is a binding site for 5-methyltetrahydropteroyltri-L-glutamate. S89 carries the phosphoserine modification. Residue N126 participates in 5-methyltetrahydropteroyltri-L-glutamate binding. Residue S242 is modified to Phosphoserine. Residues 444–446 and E497 contribute to the L-homocysteine site; that span reads IGS. L-methionine contacts are provided by residues 444-446 and E497; that span reads IGS. 5-methyltetrahydropteroyltri-L-glutamate is bound by residues D502, Y525, and 528 to 529; that span reads RY. T566 is subject to Phosphothreonine. Residue W574 coordinates 5-methyltetrahydropteroyltri-L-glutamate. D612 contributes to the L-homocysteine binding site. D612 contributes to the L-methionine binding site. S629 is subject to Phosphoserine. Zn(2+) is bound by residues H655, C657, and E677. Residue H705 is the Proton donor of the active site. S706 carries the post-translational modification Phosphoserine. Residue C737 coordinates Zn(2+).

This sequence belongs to the vitamin-B12 independent methionine synthase family. Requires Zn(2+) as cofactor.

The catalysed reaction is 5-methyltetrahydropteroyltri-L-glutamate + L-homocysteine = tetrahydropteroyltri-L-glutamate + L-methionine. It participates in amino-acid biosynthesis; L-methionine biosynthesis via de novo pathway; L-methionine from L-homocysteine (MetE route): step 1/1. In terms of biological role, catalyzes the transfer of a methyl group from 5-methyltetrahydrofolate to homocysteine resulting in methionine formation. This is 5-methyltetrahydropteroyltriglutamate--homocysteine methyltransferase (MET6) from Saccharomyces cerevisiae (strain ATCC 204508 / S288c) (Baker's yeast).